The chain runs to 240 residues: Purine nucleoside phosphorylase DeoD-type (240 aa).

Residue His5 participates in a purine D-ribonucleoside binding. Phosphate-binding positions include Gly21, Arg25, Arg44, and 88–91; that span reads RVGS. Residues 180–182 and 204–205 contribute to the a purine D-ribonucleoside site; these read EME and SD. The Proton donor role is filled by Asp205.

The protein belongs to the PNP/UDP phosphorylase family. As to quaternary structure, homohexamer; trimer of homodimers.

The catalysed reaction is a purine D-ribonucleoside + phosphate = a purine nucleobase + alpha-D-ribose 1-phosphate. The enzyme catalyses a purine 2'-deoxy-D-ribonucleoside + phosphate = a purine nucleobase + 2-deoxy-alpha-D-ribose 1-phosphate. Functionally, catalyzes the reversible phosphorolytic breakdown of the N-glycosidic bond in the beta-(deoxy)ribonucleoside molecules, with the formation of the corresponding free purine bases and pentose-1-phosphate. The sequence is that of Purine nucleoside phosphorylase DeoD-type from Actinobacillus pleuropneumoniae serotype 5b (strain L20).